The chain runs to 572 residues: Arginine--tRNA ligase (572 aa).

A 'HIGH' region motif is present at residues 122-132 (PNLAKEMHVGH).

The protein belongs to the class-I aminoacyl-tRNA synthetase family. Monomer.

The protein resides in the cytoplasm. The enzyme catalyses tRNA(Arg) + L-arginine + ATP = L-arginyl-tRNA(Arg) + AMP + diphosphate. This Neisseria meningitidis serogroup B (strain ATCC BAA-335 / MC58) protein is Arginine--tRNA ligase.